We begin with the raw amino-acid sequence, 125 residues long: Protein U2 (125 aa).

This sequence belongs to the nanovirus U2 protein family.

This Milk vetch dwarf virus (isolate N) (MDV) protein is Protein U2 (DNA-U2).